The sequence spans 156 residues: Small ribosomal subunit protein uS7 (156 aa).

Belongs to the universal ribosomal protein uS7 family. Part of the 30S ribosomal subunit. Contacts proteins S9 and S11.

In terms of biological role, one of the primary rRNA binding proteins, it binds directly to 16S rRNA where it nucleates assembly of the head domain of the 30S subunit. Is located at the subunit interface close to the decoding center, probably blocks exit of the E-site tRNA. This chain is Small ribosomal subunit protein uS7, found in Enterobacter sp. (strain 638).